The primary structure comprises 406 residues: MDSKCQSIRSKTQPNLRCLFNAKNGNKYCPLHLIQNNIIDFNPKNEEFFSTVTDNNNEHLQNTINPIYKQISLDTINSIGIKTFVTKDLNKKDNGKDKTTGIKKKIKNSKSVSSKMLHEQKVTTIADSYQNTEDDLEMKLLILINNEENLEKISKLIGPAFNDLTLAEDNEDPVTYDQFWTVENGIKKPSGINRYFIFSYIDSNDKIRCFTIMSINDLISHNNLEHPITMEKIPEEDILRAIELIDFYKKEIGLFNSSNMEISREFQIKHKLSNLFKKFHVHSIYLEENWLLDITNLSNLDKIIHETNKLISNNLVSINPNLKTFDLFKKKFTVNSSKNKKILETDSNTTKETYIDAQWYIVEQWEKLIELADNTNNQIPIWVLILGLSYVVPEIKQKFPDLEIML.

This is an uncharacterized protein from Acanthamoeba polyphaga mimivirus (APMV).